The sequence spans 222 residues: Ribonuclease 3 (222 aa).

The RNase III domain occupies 3-125 (SQSVAKKLNH…LFGAIYLDAG (123 aa)). Mg(2+) is bound at residue Glu38. The active site involves Asp42. Residues Asp111 and Glu114 each coordinate Mg(2+). Residue Glu114 is part of the active site. The region spanning 152–222 (DAKTRLQEWL…AEKALKELLA (71 aa)) is the DRBM domain.

Belongs to the ribonuclease III family. In terms of assembly, homodimer. Requires Mg(2+) as cofactor.

Its subcellular location is the cytoplasm. It catalyses the reaction Endonucleolytic cleavage to 5'-phosphomonoester.. Its function is as follows. Digests double-stranded RNA. Involved in the processing of primary rRNA transcript to yield the immediate precursors to the large and small rRNAs (23S and 16S). Processes some mRNAs, and tRNAs when they are encoded in the rRNA operon. Processes pre-crRNA and tracrRNA of type II CRISPR loci if present in the organism. The sequence is that of Ribonuclease 3 from Dechloromonas aromatica (strain RCB).